The primary structure comprises 910 residues: Leucine--tRNA ligase (910 aa).

The 'HIGH' region motif lies at 42 to 52 (PYPSGKLHMGH). Positions 658-662 (TMSKS) match the 'KMSKS' region motif. ATP is bound at residue Lys-661.

Belongs to the class-I aminoacyl-tRNA synthetase family.

Its subcellular location is the cytoplasm. The enzyme catalyses tRNA(Leu) + L-leucine + ATP = L-leucyl-tRNA(Leu) + AMP + diphosphate. The chain is Leucine--tRNA ligase from Acidovorax sp. (strain JS42).